A 299-amino-acid polypeptide reads, in one-letter code: Pyridoxal kinase PdxY (299 aa).

S18 provides a ligand contact to substrate. D120 and E157 together coordinate ATP. Residue D235 coordinates substrate.

The protein belongs to the pyridoxine kinase family. PdxY subfamily. As to quaternary structure, homodimer. The cofactor is Mg(2+).

The enzyme catalyses pyridoxal + ATP = pyridoxal 5'-phosphate + ADP + H(+). It functions in the pathway cofactor metabolism; pyridoxal 5'-phosphate salvage; pyridoxal 5'-phosphate from pyridoxal: step 1/1. Functionally, pyridoxal kinase involved in the salvage pathway of pyridoxal 5'-phosphate (PLP). Catalyzes the phosphorylation of pyridoxal to PLP. This Deinococcus geothermalis (strain DSM 11300 / CIP 105573 / AG-3a) protein is Pyridoxal kinase PdxY.